Reading from the N-terminus, the 146-residue chain is Snaclec stejaggregin-B subunit beta-2 (146 aa).

The signal sequence occupies residues 1-23 (MGRFIFVSFGLLVVFLSLSGSGA). Positions 32-143 (YDLYCYRVFQ…CSQTYPFVCK (112 aa)) constitute a C-type lectin domain. Intrachain disulfides connect C53–C142 and C119–C134.

It belongs to the snaclec family. In terms of assembly, heteromultimer; disulfide-linked. In terms of tissue distribution, expressed by the venom gland.

Its subcellular location is the secreted. Interferes with one step of hemostasis (modulation of platelet aggregation, or coagulation cascade, for example). This Trimeresurus stejnegeri (Chinese green tree viper) protein is Snaclec stejaggregin-B subunit beta-2.